Reading from the N-terminus, the 186-residue chain is Ribosome-recycling factor (186 aa).

This sequence belongs to the RRF family.

Its subcellular location is the cytoplasm. Its function is as follows. Responsible for the release of ribosomes from messenger RNA at the termination of protein biosynthesis. May increase the efficiency of translation by recycling ribosomes from one round of translation to another. This chain is Ribosome-recycling factor, found in Bacteroides thetaiotaomicron (strain ATCC 29148 / DSM 2079 / JCM 5827 / CCUG 10774 / NCTC 10582 / VPI-5482 / E50).